Here is a 440-residue protein sequence, read N- to C-terminus: Chromosome partition protein MukF (440 aa).

The segment at 208 to 236 (LSETSGTLRELQDTLEAAGDKLQANLLRI) is leucine-zipper.

Belongs to the MukF family. Interacts, and probably forms a ternary complex, with MukE and MukB via its C-terminal region. The complex formation is stimulated by calcium or magnesium. It is required for an interaction between MukE and MukB.

The protein resides in the cytoplasm. It is found in the nucleoid. Functionally, involved in chromosome condensation, segregation and cell cycle progression. May participate in facilitating chromosome segregation by condensation DNA from both sides of a centrally located replisome during cell division. Not required for mini-F plasmid partitioning. Probably acts via its interaction with MukB and MukE. Overexpression results in anucleate cells. It has a calcium binding activity. This is Chromosome partition protein MukF from Salmonella arizonae (strain ATCC BAA-731 / CDC346-86 / RSK2980).